The primary structure comprises 388 residues: Na(+)/H(+) antiporter NhaA (388 aa).

11 helical membrane passes run 14–34 (GGII…MGAT), 59–79 (MLLW…GLEV), 95–115 (VFPV…YLAF), 125–145 (GWAI…ALLG), 154–174 (IFLM…IALF), 179–199 (LSIV…LLNL), 219–239 (VLKS…FIPL), 254–274 (ILHP…NAGV), 292–312 (IIAG…WLAL), 328–348 (IMAV…IASL), and 356–376 (ALIN…AVVG).

The protein belongs to the NhaA Na(+)/H(+) (TC 2.A.33) antiporter family.

It localises to the cell inner membrane. The enzyme catalyses Na(+)(in) + 2 H(+)(out) = Na(+)(out) + 2 H(+)(in). In terms of biological role, na(+)/H(+) antiporter that extrudes sodium in exchange for external protons. This chain is Na(+)/H(+) antiporter NhaA, found in Salmonella arizonae (strain ATCC BAA-731 / CDC346-86 / RSK2980).